The following is a 353-amino-acid chain: Nicotinate-nucleotide--dimethylbenzimidazole phosphoribosyltransferase (353 aa).

Catalysis depends on E319, which acts as the Proton acceptor.

It belongs to the CobT family.

It carries out the reaction 5,6-dimethylbenzimidazole + nicotinate beta-D-ribonucleotide = alpha-ribazole 5'-phosphate + nicotinate + H(+). It functions in the pathway nucleoside biosynthesis; alpha-ribazole biosynthesis; alpha-ribazole from 5,6-dimethylbenzimidazole: step 1/2. Its function is as follows. Catalyzes the synthesis of alpha-ribazole-5'-phosphate from nicotinate mononucleotide (NAMN) and 5,6-dimethylbenzimidazole (DMB). This Chlorobaculum tepidum (strain ATCC 49652 / DSM 12025 / NBRC 103806 / TLS) (Chlorobium tepidum) protein is Nicotinate-nucleotide--dimethylbenzimidazole phosphoribosyltransferase.